The sequence spans 185 residues: Adenylyl-sulfate kinase (185 aa).

13 to 20 (GLSGAGKS) is a binding site for ATP. The active-site Phosphoserine intermediate is serine 86.

The protein belongs to the APS kinase family.

The enzyme catalyses adenosine 5'-phosphosulfate + ATP = 3'-phosphoadenylyl sulfate + ADP + H(+). The protein operates within sulfur metabolism; hydrogen sulfide biosynthesis; sulfite from sulfate: step 2/3. Its function is as follows. Catalyzes the synthesis of activated sulfate. This is Adenylyl-sulfate kinase from Myxococcus xanthus (strain DK1622).